The chain runs to 505 residues: Deoxyguanosinetriphosphate triphosphohydrolase (505 aa).

The region spanning 66-273 (RLTHSMEVQQ…MEAADDISYC (208 aa)) is the HD domain.

It belongs to the dGTPase family. Type 1 subfamily. Homotetramer. The cofactor is Mg(2+).

It catalyses the reaction dGTP + H2O = 2'-deoxyguanosine + triphosphate + H(+). Its activity is regulated as follows. Inhibited by the action of reducing agents such as dithiothreitol and 2-mercaptoethanol. DGTPase preferentially hydrolyzes dGTP over the other canonical NTPs. In Shigella boydii, this protein is Deoxyguanosinetriphosphate triphosphohydrolase.